The chain runs to 372 residues: Chaperone protein DnaJ (372 aa).

Positions 5-69 (DYYEVLGVDR…QKKARYDQFG (65 aa)) constitute a J domain. A CR-type zinc finger spans residues 129 to 211 (GKETEIEIPR…CSGKGKVRKR (83 aa)). Zn(2+) is bound by residues C142, C145, C159, C162, C185, C188, C199, and C202. 4 CXXCXGXG motif repeats span residues 142-149 (CGTCHGSG), 159-166 (CSHCGGSG), 185-192 (CNYCEGTG), and 199-206 (CATCSGKG).

This sequence belongs to the DnaJ family. As to quaternary structure, homodimer. The cofactor is Zn(2+).

Its subcellular location is the cytoplasm. Participates actively in the response to hyperosmotic and heat shock by preventing the aggregation of stress-denatured proteins and by disaggregating proteins, also in an autonomous, DnaK-independent fashion. Unfolded proteins bind initially to DnaJ; upon interaction with the DnaJ-bound protein, DnaK hydrolyzes its bound ATP, resulting in the formation of a stable complex. GrpE releases ADP from DnaK; ATP binding to DnaK triggers the release of the substrate protein, thus completing the reaction cycle. Several rounds of ATP-dependent interactions between DnaJ, DnaK and GrpE are required for fully efficient folding. Also involved, together with DnaK and GrpE, in the DNA replication of plasmids through activation of initiation proteins. The chain is Chaperone protein DnaJ from Shouchella clausii (strain KSM-K16) (Alkalihalobacillus clausii).